A 387-amino-acid chain; its full sequence is S-adenosylmethionine synthase (387 aa).

H16 is a binding site for ATP. Residue D18 coordinates Mg(2+). E44 serves as a coordination point for K(+). The L-methionine site is built by E57 and Q100. The interval Q100–R110 is flexible loop. ATP-binding positions include D167–K169, R232–F233, D241, R247–K248, A264, and K268. Residue D241 coordinates L-methionine. L-methionine is bound at residue K272.

It belongs to the AdoMet synthase family. Homotetramer; dimer of dimers. Requires Mg(2+) as cofactor. The cofactor is K(+).

The protein localises to the cytoplasm. It carries out the reaction L-methionine + ATP + H2O = S-adenosyl-L-methionine + phosphate + diphosphate. It functions in the pathway amino-acid biosynthesis; S-adenosyl-L-methionine biosynthesis; S-adenosyl-L-methionine from L-methionine: step 1/1. Its function is as follows. Catalyzes the formation of S-adenosylmethionine (AdoMet) from methionine and ATP. The overall synthetic reaction is composed of two sequential steps, AdoMet formation and the subsequent tripolyphosphate hydrolysis which occurs prior to release of AdoMet from the enzyme. The sequence is that of S-adenosylmethionine synthase from Cupriavidus pinatubonensis (strain JMP 134 / LMG 1197) (Cupriavidus necator (strain JMP 134)).